Consider the following 303-residue polypeptide: Aspartate carbamoyltransferase catalytic subunit (303 aa).

Residues R49 and T50 each contribute to the carbamoyl phosphate site. An L-aspartate-binding site is contributed by K77. Positions 99, 126, and 129 each coordinate carbamoyl phosphate. The L-aspartate site is built by R159 and R211. Carbamoyl phosphate is bound by residues S252 and P253.

It belongs to the aspartate/ornithine carbamoyltransferase superfamily. ATCase family. Heterododecamer (2C3:3R2) of six catalytic PyrB chains organized as two trimers (C3), and six regulatory PyrI chains organized as three dimers (R2).

The enzyme catalyses carbamoyl phosphate + L-aspartate = N-carbamoyl-L-aspartate + phosphate + H(+). It participates in pyrimidine metabolism; UMP biosynthesis via de novo pathway; (S)-dihydroorotate from bicarbonate: step 2/3. In terms of biological role, catalyzes the condensation of carbamoyl phosphate and aspartate to form carbamoyl aspartate and inorganic phosphate, the committed step in the de novo pyrimidine nucleotide biosynthesis pathway. The chain is Aspartate carbamoyltransferase catalytic subunit from Listeria monocytogenes serovar 1/2a (strain ATCC BAA-679 / EGD-e).